Here is a 304-residue protein sequence, read N- to C-terminus: Nucleotide-binding protein ROP_69550 (304 aa).

24–31 (GLSGAGLQ) serves as a coordination point for ATP. 75–78 (DVRS) contacts GTP.

The protein belongs to the RapZ-like family.

Displays ATPase and GTPase activities. This chain is Nucleotide-binding protein ROP_69550, found in Rhodococcus opacus (strain B4).